The primary structure comprises 328 residues: RNA-binding motif protein, X-linked 2 (328 aa).

Residue K8 forms a Glycyl lysine isopeptide (Lys-Gly) (interchain with G-Cter in SUMO2) linkage. One can recognise an RRM domain in the interval 36–114 (AWIFLGGLPY…RTIRVDHVAN (79 aa)). The tract at residues 118 to 328 (PQESEDVDDV…SFHASDRRHY (211 aa)) is disordered. Position 140 is a phosphothreonine (T140). A Phosphoserine modification is found at S149. Positions 157–172 (TKKPKKDKKEKKKKKE) are enriched in basic residues. Basic and acidic residues-rich tracts occupy residues 192–219 (TVKETDEQSAKKHSSKPSERAQKSECRE), 236–247 (GRAEEPEWEAKK), and 255–273 (KPSSRREGEEKSRDKDRGR). K246 is covalently cross-linked (Glycyl lysine isopeptide (Lys-Gly) (interchain with G-Cter in SUMO2)). S274 bears the Phosphoserine mark. Over residues 291 to 314 (HRSRSRSRSRSPDRSHRHKKHRYS) the composition is skewed to basic residues. Residues 315–328 (HERESFHASDRRHY) are compositionally biased toward basic and acidic residues.

The protein belongs to the IST3 family. As to quaternary structure, part of the activated spliceosome B/catalytic step 1 spliceosome, one of the forms of the spliceosome which has a well-formed active site but still cannot catalyze the branching reaction and is composed of at least 52 proteins, the U2, U5 and U6 snRNAs and the pre-mRNA. Component of the minor spliceosome, which splices U12-type introns.

Its subcellular location is the nucleus. Involved in pre-mRNA splicing as component of the activated spliceosome. As a component of the minor spliceosome, involved in the splicing of U12-type introns in pre-mRNAs. The chain is RNA-binding motif protein, X-linked 2 (Rbmx2) from Rattus norvegicus (Rat).